A 337-amino-acid polypeptide reads, in one-letter code: MEQPWPPPGPWSLPRAEGEAEEENDLDVFPSSPRCPQLPGGSAQMYSHGIELACQKQKEFVKSSVACKWNLAEAQQKLGSLALHNSESLDQEHAKAQIAVSELRQREEEWRQKEEALVQREKMCLWSMDAISKDVFNKSFINQDKRKDTEDEDKSESFMQKYEQKIRHFGMLSRWDDSQRFLSDHPYLVCEETAKYLILWCFHLEAEKKGALMEQIAHQAVVMQFIMEMAKNCNVDPRGCFRLFFQKAKAEEEGYFEAFKNELEAFKSRVRLYSQSQSFQPMTVQNHVPHSGVGSIGLLESLPQNPDYLQYSINTALCSLNSVVHKEDDEPKMMDTV.

Positions 1–11 (MEQPWPPPGPW) are enriched in pro residues. The disordered stretch occupies residues 1–42 (MEQPWPPPGPWSLPRAEGEAEEENDLDVFPSSPRCPQLPGGS). The tract at residues 2 to 171 (EQPWPPPGPW…YEQKIRHFGM (170 aa)) is self-association. Phosphoserine is present on residues S32 and S88. Residues 85–122 (NSESLDQEHAKAQIAVSELRQREEEWRQKEEALVQREK) adopt a coiled-coil conformation. Positions 147–277 (KDTEDEDKSE…SRVRLYSQSQ (131 aa)) are self-association and interaction with Hsp90. Residues 267–337 (KSRVRLYSQS…DDEPKMMDTV (71 aa)) are interaction with Hsp70. The required for interaction with STIP1 stretch occupies residues 278-337 (SFQPMTVQNHVPHSGVGSIGLLESLPQNPDYLQYSINTALCSLNSVVHKEDDEPKMMDTV).

The protein belongs to the CDC37 family. Self-associates. Forms complexes with Hsp70 and Hsp90. Interacts with CDC37, FKBP4, PPID and STIP1.

The protein localises to the cytoplasm. In terms of biological role, co-chaperone that binds to numerous proteins and promotes their interaction with Hsp70 and Hsp90. In Pongo abelii (Sumatran orangutan), this protein is Hsp90 co-chaperone Cdc37-like 1 (CDC37L1).